A 752-amino-acid chain; its full sequence is MSDSEEDEEEEEASEVILSSVVQKKKKKNLRFGEEVERRDGLVLLAQSTPMVRSRSQGTTRRVTPTPLVDVEKPLPNGDLYIGSFSGGFPHGSGKYLWKDGCMYEGDWKRGKASGKGKFSWPSGATYEGEFKSGRMEGFGTFTGADGDTYRGTWVADRKHGHGQKRYANGDFYEGTWRRNLQDGRGRYVWRNGNQYTGEWRSGVISGKGLLVWPNGNRYEGLWENGIPKGNGVFTWSDGSSCVGAWNESNIMRSFFNGVEKNDLIVGNRKRSSVDSGAGSLGGEKVFPRICIWESDGEAGDITCDIIDNVEASMIYRDRISVDRDGFRQFKKNPCWFNGEAKKPGQTISKGHKKYDLMLNLQLGIRYSVGKHASIVRDLKQTDFDPKEKFWTRFPPEGTKTTPPHQSVDFRWKDYCPLVFRRLRELFQVDPAKYMLAICGNDALRELSSPGKSGSFFYLTQDDRFMIKTVKKSEVKVLLRMLPSYYKHVCQYENSLVTRFYGVHCVKPVGGQKTRFIVMGNLFCSEYRIQRRFDLKGSSHGRSTAKPEGEIDETTTLKDLDLNFSFRLQRNWYQELMKQIKRDCEFLEAERIMDYSLLVGVHFRDDNTGEKMGLSPFVLRSGRIDSYQNEKFMRGCRFLEAELQDMDRILAGRKPSIRLGANMPAKAERMARRSDFDQYSSGGASYPSHGEMYEVVLYFGVIDILQDYDITKKIEHAYKSLQADPASISAVDPKLYSKRFRDFISRIFIEEG.

MORN repeat units follow at residues 81 to 103, 104 to 126, 127 to 149, 150 to 172, 173 to 195, 196 to 218, and 219 to 241; these read YIGS…DGCM, YEGD…SGAT, YEGE…DGDT, YRGT…NGDF, YEGT…NGNQ, YTGE…NGNR, and YEGL…DGSS. Residues 349-748 form the PIPK domain; the sequence is SKGHKKYDLM…RFRDFISRIF (400 aa). The segment at 708–729 is activation loop; that stretch reads YDITKKIEHAYKSLQADPASIS.

Post-translationally, phosphorylation inactivates the enzyme. In terms of tissue distribution, expressed in the whole plant, preferentially in roots. Strongly expressed in meristematic tissues, namely procambial cell layers.

The enzyme catalyses a 1,2-diacyl-sn-glycero-3-phospho-(1D-myo-inositol 4-phosphate) + ATP = a 1,2-diacyl-sn-glycero-3-phospho-(1D-myo-inositol-4,5-bisphosphate) + ADP + H(+). Its function is as follows. Catalyzes the synthesis of phosphatidylinositol 4,5-bisphosphate and phosphatidylinositol 3,4-bisphosphate. This chain is Phosphatidylinositol 4-phosphate 5-kinase 1 (PIP5K1), found in Arabidopsis thaliana (Mouse-ear cress).